Here is a 242-residue protein sequence, read N- to C-terminus: Large ribosomal subunit protein uL1 (242 aa).

Belongs to the universal ribosomal protein uL1 family. As to quaternary structure, part of the 50S ribosomal subunit.

In terms of biological role, binds directly to 23S rRNA. The L1 stalk is quite mobile in the ribosome, and is involved in E site tRNA release. Protein L1 is also a translational repressor protein, it controls the translation of the L11 operon by binding to its mRNA. The protein is Large ribosomal subunit protein uL1 of Streptomyces virginiae (Streptomyces cinnamonensis).